A 1516-amino-acid polypeptide reads, in one-letter code: UDP-glucose:glycoprotein glucosyltransferase 2 (1516 aa).

Positions 1–27 (MAPAKATNVVRLLLGSTALWLSQLGSG) are cleaved as a signal peptide. Residues N256, N286, N920, and N950 are each glycosylated (N-linked (GlcNAc...) asparagine). The glucosyltransferase stretch occupies residues 1220-1516 (LHKENKKEKD…QDTILTHDEL (297 aa)). Residue Y1289 is modified to Phosphotyrosine. A Prevents secretion from ER motif is present at residues 1513–1516 (HDEL).

The protein belongs to the glycosyltransferase 8 family. As to quaternary structure, interacts with METTL23. Interacts with SELENOF. The cofactor is Ca(2+). Mn(2+) serves as cofactor. Higher levels in kidney, pancreas, heart, and skeletal muscle.

The protein resides in the endoplasmic reticulum lumen. The protein localises to the endoplasmic reticulum-Golgi intermediate compartment. The catalysed reaction is N(4)-(alpha-D-Man-(1-&gt;2)-alpha-D-Man-(1-&gt;2)-alpha-D-Man-(1-&gt;3)-[alpha-D-Man-(1-&gt;2)-alpha-D-Man-(1-&gt;3)-[alpha-D-Man-(1-&gt;2)-alpha-D-Man-(1-&gt;6)]-alpha-D-Man-(1-&gt;6)]-beta-D-Man-(1-&gt;4)-beta-D-GlcNAc-(1-&gt;4)-beta-D-GlcNAc)-L-asparaginyl-[protein] (N-glucan mannose isomer 9A1,2,3B1,2,3) + UDP-alpha-D-glucose = N(4)-(alpha-D-Glc-(1-&gt;3)-alpha-D-Man-(1-&gt;2)-alpha-D-Man-(1-&gt;2)-alpha-D-Man-(1-&gt;3)-[alpha-D-Man-(1-&gt;2)-alpha-D-Man-(1-&gt;3)-[alpha-D-Man-(1-&gt;2)-alpha-D-Man-(1-&gt;6)]-alpha-D-Man-(1-&gt;6)]-beta-D-Man-(1-&gt;4)-beta-D-GlcNAc-(1-&gt;4)-beta-D-GlcNAc)-L-asparaginyl-[protein] + UDP + H(+). It participates in protein modification; protein glycosylation. Ethylenediaminetetraacetic acid completely abolishes catalytic activity. Catalytic activity is enhanced by complex formation with SELENOF. Recognizes glycoproteins with minor folding defects. Reglucosylates single N-glycans near the misfolded part of the protein, thus providing quality control for protein folding in the endoplasmic reticulum. Reglucosylated proteins are recognized by calreticulin for recycling to the endoplasmic reticulum and refolding or degradation. The sequence is that of UDP-glucose:glycoprotein glucosyltransferase 2 (UGGT2) from Homo sapiens (Human).